A 562-amino-acid chain; its full sequence is Formate--tetrahydrofolate ligase (562 aa).

77 to 84 (TPAGEGKS) is a binding site for ATP.

It belongs to the formate--tetrahydrofolate ligase family.

The catalysed reaction is (6S)-5,6,7,8-tetrahydrofolate + formate + ATP = (6R)-10-formyltetrahydrofolate + ADP + phosphate. It participates in one-carbon metabolism; tetrahydrofolate interconversion. The protein is Formate--tetrahydrofolate ligase of Corynebacterium jeikeium (strain K411).